Here is a 113-residue protein sequence, read N- to C-terminus: MVAFRMMSMALLVVVASSWWASPVEAASSPRVDHRLVRRSLFDPSCTGVFDRELLGRLNRVCDDCYNVFREPKVATECRSHCFLNPAFIQCLEYIIPEVLHEEYQANVQLVGK.

The first 26 residues, 1–26 (MVAFRMMSMALLVVVASSWWASPVEA), serve as a signal peptide directing secretion. 3 disulfide bridges follow: Cys46-Cys82, Cys62-Cys78, and Cys65-Cys91. Val111 carries the post-translational modification Valine amide.

The protein belongs to the arthropod CHH/MIH/GIH/VIH hormone family. Expressed at a constant level in the eyestalks of juveniles and mature females. A low level expression is seen in the central nervous system.

Its subcellular location is the secreted. Its function is as follows. Hormone found in the sinus gland of isopods and decapods which controls the blood sugar level. Has a secretagogue action over the amylase released from the midgut gland. May act as a stress hormone and may be involved in the control of molting and reproduction. This Metapenaeus ensis (Greasyback shrimp) protein is Crustacean hyperglycemic hormones B.